A 474-amino-acid polypeptide reads, in one-letter code: Glutamate--tRNA ligase (474 aa).

Positions 9–19 (PSPTGLLHMGG) match the 'HIGH' region motif. A 'KMSKS' region motif is present at residues 238–242 (KLSKR). Lys-241 provides a ligand contact to ATP.

Belongs to the class-I aminoacyl-tRNA synthetase family. Glutamate--tRNA ligase type 1 subfamily. As to quaternary structure, monomer.

The protein localises to the cytoplasm. The enzyme catalyses tRNA(Glu) + L-glutamate + ATP = L-glutamyl-tRNA(Glu) + AMP + diphosphate. Functionally, catalyzes the attachment of glutamate to tRNA(Glu) in a two-step reaction: glutamate is first activated by ATP to form Glu-AMP and then transferred to the acceptor end of tRNA(Glu). The sequence is that of Glutamate--tRNA ligase from Buchnera aphidicola subsp. Cinara cedri (strain Cc).